The sequence spans 81 residues: Gamma-conotoxin-like TxMEKL-0511 (81 aa).

A signal peptide spans 1 to 19; the sequence is MEKLTILLLVAAVLLSIQA. The propeptide occupies 20–45; it reads LNQEKHQRAKINLLSKRKPPAERWWR. 3 cysteine pairs are disulfide-bonded: C49–C63, C56–C67, and C62–C72.

It belongs to the conotoxin O2 superfamily. In terms of tissue distribution, expressed by the venom duct.

It is found in the secreted. Its function is as follows. Gamma-conotoxins may act on voltage-gated non-specific cation pacemaker channels (HCN). This chain is Gamma-conotoxin-like TxMEKL-0511, found in Conus textile (Cloth-of-gold cone).